The sequence spans 171 residues: MQWSYRFVSGLLVLASIVGMTFALYLEHFKGLEPCPLCIFQRVGLMAMGIVALIAFLHNPVSNAFKRVYAFLATLGILWSVGVAIRHVWLQTLPPDQVPSCGPGLNYLLDALPLKTVLQQVLQGSGECAAIHWTFLGQSLPVWSLAYFSLILLVCVWQLLRRYPVIVTKKK.

Residues 1-8 (MQWSYRFV) lie on the Cytoplasmic side of the membrane. Residues 9–25 (SGLLVLASIVGMTFALY) traverse the membrane as a helical segment. The Periplasmic portion of the chain corresponds to 26–43 (LEHFKGLEPCPLCIFQRV). Cysteine 35 and cysteine 38 are disulfide-bonded. Residues 44-60 (GLMAMGIVALIAFLHNP) traverse the membrane as a helical segment. At 61 to 67 (VSNAFKR) the chain is on the cytoplasmic side. Residues 68-85 (VYAFLATLGILWSVGVAI) traverse the membrane as a helical segment. Residues 86–142 (RHVWLQTLPPDQVPSCGPGLNYLLDALPLKTVLQQVLQGSGECAAIHWTFLGQSLPV) are Periplasmic-facing. A disulfide bridge links cysteine 101 with cysteine 128. The helical transmembrane segment at 143–161 (WSLAYFSLILLVCVWQLLR) threads the bilayer. Residues 162-171 (RYPVIVTKKK) are Cytoplasmic-facing.

Belongs to the DsbB family.

The protein localises to the cell inner membrane. Functionally, required for disulfide bond formation in some periplasmic proteins. Acts by oxidizing the DsbA protein. The protein is Disulfide bond formation protein B of Acinetobacter baylyi (strain ATCC 33305 / BD413 / ADP1).